The following is a 413-amino-acid chain: Glucose-1-phosphatase (413 aa).

Positions 1–22 (MKKSLLAVAVAGAVLLSSAVQA) are cleaved as a signal peptide. Arg39 lines the substrate pocket. The active-site Nucleophile is the His40. The substrate site is built by Arg43, Arg116, and Glu218. The active-site Proton donor is Asp312.

It belongs to the histidine acid phosphatase family. As to quaternary structure, homodimer.

The protein localises to the periplasm. It carries out the reaction alpha-D-glucose 1-phosphate + H2O = D-glucose + phosphate. This is Glucose-1-phosphatase (agp) from Salmonella typhimurium (strain LT2 / SGSC1412 / ATCC 700720).